Consider the following 403-residue polypeptide: ESX-5 secretion system protein EccE5 (403 aa).

Transmembrane regions (helical) follow at residues 9-29 (LALS…ILIV) and 43-63 (IAWW…VVTY).

This sequence belongs to the EccE family. In terms of assembly, part of the ESX-5 / type VII secretion system (T7SS), which is composed of cytosolic and membrane components. The ESX-5 membrane complex is composed of EccB5, EccC5, EccD5 and EccE5.

Its subcellular location is the cell inner membrane. Part of the ESX-5 specialized secretion system, which is responsible for the secretion of EsxN and a number of PE_PGRS and PPE proteins. The protein is ESX-5 secretion system protein EccE5 of Mycobacterium marinum (strain ATCC BAA-535 / M).